The primary structure comprises 524 residues: MCAIAYLGGLLTGIVIAIIASIIASVISYRKGIEFRKKKAEAKIGSAEQEAERIISEAQKIAEAKKREVLLEAKEEIHKSRLELDREIKERRNEIQRLERRLVQKEEALDRKVESLEQKEELLNKKTKEIQELYEQTLETQRQQVAELERISGLSVDEAKEVLLKNVENEVKHEMAILIKDIEAKAKEEAEIRAKNIIAMAIQKCAADHVSEVTVSVVPLPNDEMKGRIIGREGRNIRTLETLTGIDLIIDDTPEAVILSGFDPIRREIARITLEKLILDGRIHPARIEEMVEKARKEVENTIRQEGENATFETGVHGLHPEIVRLLGKLKFRTSYGQNVLSHSIEVARLAGLMAAELGVDVNLAKRAGLLHDIGKAVDHEVEGSHVTIGADIAKKYKESNEVVNAIASHHGDVEATSIIAVLVQAADSISAARPGARRETLESYIKRLEKLEEIANSFDGVDKCFAIQAGREIRIMVKPEDVSDSDIALIARDIVKRIENELDYPGQIKVNVIRETRYIEYAK.

Residues 7–27 traverse the membrane as a helical segment; that stretch reads LGGLLTGIVIAIIASIIASVI. A KH domain is found at 214-299; that stretch reads TVSVVPLPND…EMVEKARKEV (86 aa). Residues 340–433 enclose the HD domain; it reads VLSHSIEVAR…VQAADSISAA (94 aa).

The protein belongs to the RNase Y family.

The protein resides in the cell membrane. Functionally, endoribonuclease that initiates mRNA decay. In Acetivibrio thermocellus (strain ATCC 27405 / DSM 1237 / JCM 9322 / NBRC 103400 / NCIMB 10682 / NRRL B-4536 / VPI 7372) (Clostridium thermocellum), this protein is Ribonuclease Y.